We begin with the raw amino-acid sequence, 754 residues long: MTSNNSLLGRGRMSYSSTAPPRFKRSVDQRDTFSDNFDYDKDSSNRGRTYIAASNSTTGVPPPNNSRSGCTNNTNNTNNTSNTSNTNNNDSVDENTVFETLPYYLPCFSWLPEYTFNKLWGDVIAGISVASFQIPLALSYTTSIAHVPPLCGLYSLAISPFVYGILGSVPQMIVGPESAISLVVGQAVESITLHKENVSLIDISTVITFVSGTILLFSGISRFGFLGNVLSKALLRGFISSVGLVMIINSLISELKLDKFLVSLPQHYHTPFEKILFLIDYAPAQYHIPTAIFSGCCLIVLFLTRLLKRKLMKYHKSAIFFPDILLVVIVTILISMKFNLKHRYGISIIGDFSMDNFDELKNPLTRPRRKLIPDLFSASLIVAMLGFFESTTASKSLGTTYNLTVSSNRELVALGFMNIVISLFGALPAFGGYGRSKINALSGAQSVMSGVFMGVITLITMNLLLQFVHYIPNCVLSVITTIIGISLLEEVPGDIKFHLRCGGFSELFVFAVTFCTTIFYSIEAGICIGCVYSIINIIKHSAKSRIQILARVAGTSNFTNLDDYMMNMKRNSLDVEGTEEIEGCMIVRIPEPLTFTNSEDLKQRLDRIERYGSSKIHPGRKSLRSKDSIKYVIFDLGGMTSIDSSAAQVLEEIITSYKRRNVFIYLVNVSINDKVRRRLFKAGVAASVERAQANNNENNTSNTFSDAGETYSPYFDSIDAALYEIEKMKIKGNNVPNNDSESFMSNTLFNSSLV.

The tract at residues 1 to 91 (MTSNNSLLGR…NTSNTNNNDS (91 aa)) is disordered. Residues 1 to 118 (MTSNNSLLGR…SWLPEYTFNK (118 aa)) lie on the Cytoplasmic side of the membrane. Residues 25-45 (RSVDQRDTFSDNFDYDKDSSN) are compositionally biased toward basic and acidic residues. Over residues 65-89 (NSRSGCTNNTNNTNNTSNTSNTNNN) the composition is skewed to low complexity. A helical transmembrane segment spans residues 119–139 (LWGDVIAGISVASFQIPLALS). Over 140 to 146 (YTTSIAH) the chain is Lumenal. The helical transmembrane segment at 147-167 (VPPLCGLYSLAISPFVYGILG) threads the bilayer. At 168–172 (SVPQM) the chain is on the cytoplasmic side. The helical transmembrane segment at 173-193 (IVGPESAISLVVGQAVESITL) threads the bilayer. The Lumenal portion of the chain corresponds to 194 to 199 (HKENVS). The helical transmembrane segment at 200 to 220 (LIDISTVITFVSGTILLFSGI) threads the bilayer. The Cytoplasmic segment spans residues 221-232 (SRFGFLGNVLSK). A helical transmembrane segment spans residues 233–253 (ALLRGFISSVGLVMIINSLIS). At 254 to 282 (ELKLDKFLVSLPQHYHTPFEKILFLIDYA) the chain is on the lumenal side. Residues 283–303 (PAQYHIPTAIFSGCCLIVLFL) traverse the membrane as a helical segment. Residues 304 to 317 (TRLLKRKLMKYHKS) lie on the Cytoplasmic side of the membrane. Residues 318 to 338 (AIFFPDILLVVIVTILISMKF) form a helical membrane-spanning segment. The Lumenal portion of the chain corresponds to 339-370 (NLKHRYGISIIGDFSMDNFDELKNPLTRPRRK). A helical membrane pass occupies residues 371 to 391 (LIPDLFSASLIVAMLGFFEST). The Cytoplasmic segment spans residues 392–410 (TASKSLGTTYNLTVSSNRE). The helical transmembrane segment at 411-431 (LVALGFMNIVISLFGALPAFG) threads the bilayer. Residues 432–450 (GYGRSKINALSGAQSVMSG) are Lumenal-facing. A helical transmembrane segment spans residues 451-471 (VFMGVITLITMNLLLQFVHYI). Topologically, residues 472-474 (PNC) are cytoplasmic. Residues 475–495 (VLSVITTIIGISLLEEVPGDI) form a helical membrane-spanning segment. The Lumenal portion of the chain corresponds to 496–517 (KFHLRCGGFSELFVFAVTFCTT). Residues 518 to 538 (IFYSIEAGICIGCVYSIINII) form a helical membrane-spanning segment. The Cytoplasmic segment spans residues 539-754 (KHSAKSRIQI…SNTLFNSSLV (216 aa)). The STAS domain maps to 574 to 725 (DVEGTEEIEG…DSIDAALYEI (152 aa)).

The protein belongs to the SLC26A/SulP transporter (TC 2.A.53) family.

Its subcellular location is the endoplasmic reticulum membrane. Possible sulfate transporter. This Saccharomyces cerevisiae (strain ATCC 204508 / S288c) (Baker's yeast) protein is Putative sulfate transporter YPR003C.